The primary structure comprises 143 residues: UPF0251 protein CA_C3166 (143 aa).

This sequence belongs to the UPF0251 family.

The polypeptide is UPF0251 protein CA_C3166 (Clostridium acetobutylicum (strain ATCC 824 / DSM 792 / JCM 1419 / IAM 19013 / LMG 5710 / NBRC 13948 / NRRL B-527 / VKM B-1787 / 2291 / W)).